Here is a 578-residue protein sequence, read N- to C-terminus: Acyl-coenzyme A synthetase ACSM5, mitochondrial (578 aa).

Residues 1-22 (MRLWLRGLACQALRSSWGVCRI) constitute a mitochondrion transit peptide. An N6-acetyllysine; alternate modification is found at K96. K96 is modified (N6-succinyllysine; alternate). At K151 the chain carries N6-acetyllysine. Residue 229-237 (TSGTTGAPK) participates in ATP binding. K302 carries the post-translational modification N6-acetyllysine; alternate. K302 bears the N6-succinyllysine; alternate mark. K335 is subject to N6-acetyllysine. Residues 367–372 (EGYGQS), D454, R469, and K565 each bind ATP.

Belongs to the ATP-dependent AMP-binding enzyme family. Mg(2+) serves as cofactor. It depends on Mn(2+) as a cofactor.

It is found in the mitochondrion matrix. It catalyses the reaction a medium-chain fatty acid + ATP + CoA = a medium-chain fatty acyl-CoA + AMP + diphosphate. Functionally, catalyzes the activation of fatty acids by CoA to produce an acyl-CoA, the first step in fatty acid metabolism. The sequence is that of Acyl-coenzyme A synthetase ACSM5, mitochondrial (Acsm5) from Mus musculus (Mouse).